We begin with the raw amino-acid sequence, 65 residues long: Metallothionein-B (65 aa).

It belongs to the metallothionein superfamily. Type 4 family.

Metallothioneins have a high content of cysteine residues that bind various heavy metals. The sequence is that of Metallothionein-B (MTB1) from Strongylocentrotus purpuratus (Purple sea urchin).